The sequence spans 337 residues: BRI1 kinase inhibitor 1 (337 aa).

The segment covering 1–25 (METNLQQVKNSSQTFSEKQNPKQEA) has biased composition (polar residues). 2 disordered regions span residues 1–38 (METN…SSPS) and 51–72 (SSSS…SSYQ). Over residues 26–38 (SPSPISSTCSSPS) the composition is skewed to low complexity. Y211 carries the post-translational modification Phosphotyrosine. Residues 270 to 310 (SAPASMRTSPTNSGHLRVSTAGLSSSSGSTSSSSSDSTMEE) form a disordered region. The segment covering 288-310 (STAGLSSSSGSTSSSSSDSTMEE) has biased composition (low complexity).

Interacts (via C-terminus) with BRI1 (via kinase domain). In terms of processing, phosphorylated on Tyr-211 in response to brassinosteroid perception, leading to its inactivation: once phosphorylated, displaced into the cytosol where it is inactive. As to expression, expressed in leaves, petioles, shoot apices, hypocotyls, roots and flowers.

It is found in the cell membrane. Its subcellular location is the cytoplasm. Its function is as follows. Negative regulator of brassinosteroid signaling. When associated to the membrane, limits the interaction of BRI1 with BAK1 by binding to the kinase-inactive form of BRI1. In Arabidopsis thaliana (Mouse-ear cress), this protein is BRI1 kinase inhibitor 1 (BKI1).